The sequence spans 1142 residues: Error-prone DNA polymerase (1142 aa).

A disordered region spans residues 291 to 361 (TSSPAQAARE…GTGAAAGTDR (71 aa)). Low complexity-rich tracts occupy residues 311-320 (LRASLPAERP) and 327-344 (GPAA…PGEP). Residues 345-355 (GLAGAGGGTGA) are compositionally biased toward gly residues.

It belongs to the DNA polymerase type-C family. DnaE2 subfamily.

It localises to the cytoplasm. It carries out the reaction DNA(n) + a 2'-deoxyribonucleoside 5'-triphosphate = DNA(n+1) + diphosphate. In terms of biological role, DNA polymerase involved in damage-induced mutagenesis and translesion synthesis (TLS). It is not the major replicative DNA polymerase. In Anaeromyxobacter dehalogenans (strain 2CP-1 / ATCC BAA-258), this protein is Error-prone DNA polymerase.